Consider the following 623-residue polypeptide: Glutathione import ATP-binding protein GsiA (623 aa).

ABC transporter domains are found at residues 15–269 (VSGL…QTLL) and 325–564 (LRSG…RKLM). Residues 49–56 (GESGSGKS) and 357–364 (GESGSGKS) each bind ATP.

The protein belongs to the ABC transporter superfamily. Glutathione importer (TC 3.A.1.5.11) family. As to quaternary structure, the complex is composed of two ATP-binding proteins (GsiA), two transmembrane proteins (GsiC and GsiD) and a solute-binding protein (GsiB).

Its subcellular location is the cell inner membrane. The catalysed reaction is glutathione(out) + ATP + H2O = glutathione(in) + ADP + phosphate + H(+). Functionally, part of the ABC transporter complex GsiABCD involved in glutathione import. Responsible for energy coupling to the transport system. This Salmonella choleraesuis (strain SC-B67) protein is Glutathione import ATP-binding protein GsiA.